The primary structure comprises 361 residues: Histidinol-phosphate aminotransferase (361 aa).

At K216 the chain carries N6-(pyridoxal phosphate)lysine.

Belongs to the class-II pyridoxal-phosphate-dependent aminotransferase family. Histidinol-phosphate aminotransferase subfamily. Homodimer. Requires pyridoxal 5'-phosphate as cofactor.

The enzyme catalyses L-histidinol phosphate + 2-oxoglutarate = 3-(imidazol-4-yl)-2-oxopropyl phosphate + L-glutamate. The protein operates within amino-acid biosynthesis; L-histidine biosynthesis; L-histidine from 5-phospho-alpha-D-ribose 1-diphosphate: step 7/9. The protein is Histidinol-phosphate aminotransferase of Francisella philomiragia subsp. philomiragia (strain ATCC 25017 / CCUG 19701 / FSC 153 / O#319-036).